The primary structure comprises 422 residues: Zinc finger protein 550 (422 aa).

Residues 12–83 (VTFKDVAVTF…KRGLSHATCA (72 aa)) enclose the KRAB domain. The interval 113 to 158 (LESSTSSDSRLGRARDEEGLLEMQKGKVTPETDLHKETHLGKVSLE) is disordered. Residues 122–152 (RLGRARDEEGLLEMQKGKVTPETDLHKETHL) show a composition bias toward basic and acidic residues. 8 C2H2-type zinc fingers span residues 203–225 (YKCK…QRVH), 231–253 (YECN…YLIH), 259–281 (YKCL…HPIH), 287–309 (YECS…NRTH), 315–337 (FECK…YIIH), 343–365 (YDCM…QRIH), 371–393 (YECT…SVIH), and 399–421 (YKCI…QRVH).

The protein belongs to the krueppel C2H2-type zinc-finger protein family.

The protein resides in the nucleus. Functionally, may be involved in transcriptional regulation. This is Zinc finger protein 550 (ZNF550) from Homo sapiens (Human).